The following is a 439-amino-acid chain: Acyl-coenzyme A thioesterase 9, mitochondrial (439 aa).

Residues 1–21 (MKRAAIRLWTLNKGLLTHGRG) constitute a mitochondrion transit peptide. HotDog ACOT-type domains are found at residues 85–209 (SYIE…RDSE) and 289–401 (EDTK…EKEV). Lysine 102 is subject to N6-acetyllysine.

It belongs to the acyl coenzyme A hydrolase family. Interacts with NYAP1, NYAP2 and MYO16. As to expression, widely expressed.

It is found in the mitochondrion. The protein localises to the mitochondrion matrix. The protein resides in the mitochondrion inner membrane. The catalysed reaction is butanoyl-CoA + H2O = butanoate + CoA + H(+). It catalyses the reaction propanoyl-CoA + H2O = propanoate + CoA + H(+). It carries out the reaction hexadecanoyl-CoA + H2O = hexadecanoate + CoA + H(+). The enzyme catalyses octanoyl-CoA + H2O = octanoate + CoA + H(+). The catalysed reaction is decanoyl-CoA + H2O = decanoate + CoA + H(+). It catalyses the reaction tetradecanoyl-CoA + H2O = tetradecanoate + CoA + H(+). It carries out the reaction 4,8-dimethylnonanoyl-CoA + H2O = 4,8-dimethylnonanoate + CoA + H(+). The enzyme catalyses 3-methylbutanoyl-CoA + H2O = 3-methylbutanoate + CoA + H(+). The catalysed reaction is 2-methylpropanoyl-CoA + H2O = 2-methylpropanoate + CoA + H(+). The protein operates within lipid metabolism; fatty acid metabolism. Strongly inhibited by NADH and CoA. Its function is as follows. Mitochondrial acyl-CoA thioesterase. Catalyzes the hydrolysis of acyl-CoAs into free fatty acids and coenzyme A (CoA), regulating their respective intracellular levels. Shows a clear preference for hydrophobic short-, medium-, and long-chain saturated acyl-CoAs with some activity also with short-chain dicarboxylic CoA esters. Regulates both mitochondrial lipid and amino acid metabolism. This is Acyl-coenzyme A thioesterase 9, mitochondrial (Acot9) from Mus musculus (Mouse).